A 273-amino-acid polypeptide reads, in one-letter code: 4-hydroxy-tetrahydrodipicolinate reductase (273 aa).

NAD(+) is bound by residues 12–17 (GAGGRM) and Glu-38. An NADP(+)-binding site is contributed by Arg-39. Residues 102–104 (GTT) and 126–129 (AANF) contribute to the NAD(+) site. His-159 (proton donor/acceptor) is an active-site residue. His-160 provides a ligand contact to (S)-2,3,4,5-tetrahydrodipicolinate. Lys-163 (proton donor) is an active-site residue. 169–170 (GT) provides a ligand contact to (S)-2,3,4,5-tetrahydrodipicolinate.

Belongs to the DapB family. In terms of assembly, homotetramer.

It is found in the cytoplasm. It catalyses the reaction (S)-2,3,4,5-tetrahydrodipicolinate + NAD(+) + H2O = (2S,4S)-4-hydroxy-2,3,4,5-tetrahydrodipicolinate + NADH + H(+). It carries out the reaction (S)-2,3,4,5-tetrahydrodipicolinate + NADP(+) + H2O = (2S,4S)-4-hydroxy-2,3,4,5-tetrahydrodipicolinate + NADPH + H(+). Its pathway is amino-acid biosynthesis; L-lysine biosynthesis via DAP pathway; (S)-tetrahydrodipicolinate from L-aspartate: step 4/4. Its function is as follows. Catalyzes the conversion of 4-hydroxy-tetrahydrodipicolinate (HTPA) to tetrahydrodipicolinate. The sequence is that of 4-hydroxy-tetrahydrodipicolinate reductase from Shigella sonnei (strain Ss046).